Here is a 2313-residue protein sequence, read N- to C-terminus: Serine/threonine-protein kinase smg-1 (2313 aa).

Basic and acidic residues predominate over residues 779-791 (NRKSSDKKPKSTT). The disordered stretch occupies residues 779-798 (NRKSSDKKPKSTTEDVPPPA). The FAT domain maps to 1045–1528 (ARERLQLVES…VFQVVSGAAS (484 aa)). Residues 1478–1514 (VHVWKEILPQLFARLSHPSDHIRKTLVDLISRVCTAA) form an HEAT repeat. The 346-residue stretch at 1746–2091 (VADNVTILPT…DTIELFQLRV (346 aa)) folds into the PI3K/PI4K catalytic domain. The G-loop stretch occupies residues 1752-1758 (ILPTKTR). The catalytic loop stretch occupies residues 1954–1962 (GLGDRHLDN). The segment at 1974 to 1998 (HIDYNICFDKGKILRIPETVPFRLS) is activation loop. An FATC domain is found at 2281 to 2313 (RKLSPREEADVLIAEATSSANLAQMYEGWTAWV).

It belongs to the PI3/PI4-kinase family. In terms of assembly, component of a post-splicing multiprotein NMD complex. Requires Mn(2+) as cofactor.

It localises to the cytoplasm. It catalyses the reaction L-seryl-[protein] + ATP = O-phospho-L-seryl-[protein] + ADP + H(+). The catalysed reaction is L-threonyl-[protein] + ATP = O-phospho-L-threonyl-[protein] + ADP + H(+). In terms of biological role, serine/threonine protein kinase involved in mRNA surveillance. Recognizes the substrate consensus sequence [ST]-Q. Involved in nonsense-mediated decay (NMD) of mRNAs containing premature stop codons by phosphorylating smg-2. In Caenorhabditis briggsae, this protein is Serine/threonine-protein kinase smg-1 (smg-1).